The chain runs to 277 residues: Large ribosomal subunit protein uL2 (277 aa).

2 disordered regions span residues 36 to 55 (PLPKKAGRNNQGKLTVRHHG) and 213 to 277 (WKGI…RKKK).

It belongs to the universal ribosomal protein uL2 family. In terms of assembly, part of the 50S ribosomal subunit. Forms a bridge to the 30S subunit in the 70S ribosome.

Functionally, one of the primary rRNA binding proteins. Required for association of the 30S and 50S subunits to form the 70S ribosome, for tRNA binding and peptide bond formation. It has been suggested to have peptidyltransferase activity; this is somewhat controversial. Makes several contacts with the 16S rRNA in the 70S ribosome. This chain is Large ribosomal subunit protein uL2, found in Staphylococcus aureus (strain bovine RF122 / ET3-1).